Consider the following 115-residue polypeptide: MKSGVCLCVVMAVLAAGALAQPVVPAEATDPVEQRAQEAPRRQLRAVLRTDGEPRARLGALLARYIQQVRKAPSGRMSVLKNLQSLDPSHRISDRDYMGWMDFGRRSAEDYEYPS.

Residues 1–20 (MKSGVCLCVVMAVLAAGALA) form the signal peptide. Residues 21 to 70 (QPVVPAEATDPVEQRAQEAPRRQLRAVLRTDGEPRARLGALLARYIQQVR) constitute a propeptide that is removed on maturation. Tyrosine 97 carries the sulfotyrosine modification. Phenylalanine 103 bears the Phenylalanine amide mark. The propeptide occupies 107–115 (SAEDYEYPS). 2 positions are modified to sulfotyrosine: tyrosine 111 and tyrosine 113.

Belongs to the gastrin/cholecystokinin family. Binds to CCK-A receptors in the pancreas and CCK-B receptors in the brain. In terms of processing, the precursor is cleaved by proteases to produce a number of active cholecystokinins. Expressed and secreted by discrete enteroendocrine cells that reside as single cells scattered among enterocytes in the mucosa of the small intestine. Released into the blood following ingestion of a meal.

The protein localises to the secreted. In terms of biological role, this peptide hormone induces gall bladder contraction and the release of pancreatic enzymes in the gut. Its function in the brain is not clear. Binding to CCK-A receptors stimulates amylase release from the pancreas, binding to CCK-B receptors stimulates gastric acid secretion. The protein is Cholecystokinin (Cck) of Mus musculus (Mouse).